We begin with the raw amino-acid sequence, 525 residues long: Vesicular inhibitory amino acid transporter (525 aa).

Over 1–132 (MATLLRSKLT…WNVTNAIQGM (132 aa)) the chain is Cytoplasmic. The helical transmembrane segment at 133 to 153 (FVLGLPYAILHGGYLGLFLII) threads the bilayer. The Lumenal, vesicle segment spans residues 154–204 (FAAVVCCYTGKILIACLYEENEDGEVVRVRDSYVAIANACCAPRFPTLGGR). Tyr186 is modified (3'-nitrotyrosine). Residues 205-225 (VVNVAQIIELVMTCILYVVVS) traverse the membrane as a helical segment. Residues 226–265 (GNLMYNSFPGLPVSQKSWSIIATAVLLPCAFLKNLKAVSK) lie on the Cytoplasmic side of the membrane. The chain crosses the membrane as a helical span at residues 266–286 (FSLLCTLAHFVINILVIAYCL). Residues 287-305 (SRARDWAWEKVKFYIDVKK) are Lumenal, vesicle-facing. Residues 306-326 (FPISIGIIVFSYTSQIFLPSL) traverse the membrane as a helical segment. At 327–341 (EGNMQQPSEFHCMMN) the chain is on the cytoplasmic side. Residues 342–362 (WTHIAACVLKGLFALVAYLTW) form a helical membrane-spanning segment. The Lumenal, vesicle portion of the chain corresponds to 363–383 (ADETKEVITDNLPGSIRAVVN). Residues 384–404 (IFLVAKALLSYPLPFFAAVEV) traverse the membrane as a helical segment. Over 405–438 (LEKSLFQEGSRAFFPACYGGDGRLKSWGLTLRCA) the chain is Cytoplasmic. A helical transmembrane segment spans residues 439-459 (LVVFTLLMAIYVPHFALLMGL). Topologically, residues 460 to 461 (TG) are lumenal, vesicle. The helical transmembrane segment at 462–482 (SLTGAGLCFLLPSLFHLRLLW) threads the bilayer. The Cytoplasmic segment spans residues 483 to 489 (RKLLWHQ). A helical membrane pass occupies residues 490–510 (VFFDVAIFVIGGICSVSGFVH). The Lumenal, vesicle portion of the chain corresponds to 511-525 (SLEGLIEAYRTNAED).

This sequence belongs to the amino acid/polyamine transporter 2 family. As to expression, brain. Expressed at high levels within the neocortex, hippocampus, cerebellum, striatum, septal nuclei and the reticular nucleus of the thalamus. Also expressed in islets where it is more abundant in the peripheral/mantle region. Highly expressed in the nerve endings of GABA neurons in the brain and spinal cord but also in glycinergic nerve endings. Expressed in glycine-, GABA- or GABA- and glycine-containing boutons.

It is found in the cytoplasmic vesicle. Its subcellular location is the secretory vesicle. The protein localises to the synaptic vesicle membrane. The protein resides in the presynapse. It carries out the reaction beta-alanine(out) + n H(+)(in) = beta-alanine(in) + n H(+)(out). The enzyme catalyses 4-aminobutanoate(out) + n H(+)(in) = 4-aminobutanoate(in) + n H(+)(out). The catalysed reaction is glycine(out) + n H(+)(in) = glycine(in) + n H(+)(out). Functionally, antiporter that exchanges vesicular protons for cytosolic 4-aminobutanoate or to a lesser extend glycine, thus allowing their secretion from nerve terminals. The transport is equally dependent on the chemical and electrical components of the proton gradient. May also transport beta-alanine. Acidification of GABAergic synaptic vesicles is a prerequisite for 4-aminobutanoate uptake. This chain is Vesicular inhibitory amino acid transporter, found in Rattus norvegicus (Rat).